Consider the following 244-residue polypeptide: Probable Ni/Fe-hydrogenase B-type cytochrome subunit (244 aa).

Helical transmembrane passes span 39-59 (LWHWVNALAIVVLAVTGFFIG), 73-93 (FLMGYIRFAHFVAAYIFAIGM), 150-171 (FAMFFIFFLSSVFMILTGFAMY), and 204-221 (LGMWFIVVFVIVHVYAAI).

It belongs to the HupC/HyaC/HydC family.

Its subcellular location is the cell membrane. In terms of biological role, probable b-type cytochrome. This chain is Probable Ni/Fe-hydrogenase B-type cytochrome subunit (hoxZ), found in Cupriavidus necator (strain ATCC 17699 / DSM 428 / KCTC 22496 / NCIMB 10442 / H16 / Stanier 337) (Ralstonia eutropha).